We begin with the raw amino-acid sequence, 520 residues long: 2-isopropylmalate synthase (520 aa).

A Pyruvate carboxyltransferase domain is found at 5 to 267 (VIIFDTTLRD…HTNINHQEIY (263 aa)). Residues Asp14, His202, His204, and Asn238 each contribute to the Mn(2+) site. Residues 392–520 (RLDYFSVQSG…RLQQNNQEMV (129 aa)) are regulatory domain.

The protein belongs to the alpha-IPM synthase/homocitrate synthase family. LeuA type 1 subfamily. In terms of assembly, homodimer. The cofactor is Mn(2+).

The protein resides in the cytoplasm. It carries out the reaction 3-methyl-2-oxobutanoate + acetyl-CoA + H2O = (2S)-2-isopropylmalate + CoA + H(+). It functions in the pathway amino-acid biosynthesis; L-leucine biosynthesis; L-leucine from 3-methyl-2-oxobutanoate: step 1/4. Functionally, catalyzes the condensation of the acetyl group of acetyl-CoA with 3-methyl-2-oxobutanoate (2-ketoisovalerate) to form 3-carboxy-3-hydroxy-4-methylpentanoate (2-isopropylmalate). The chain is 2-isopropylmalate synthase from Yersinia enterocolitica serotype O:8 / biotype 1B (strain NCTC 13174 / 8081).